A 321-amino-acid polypeptide reads, in one-letter code: Glucokinase (321 aa).

Residue 8 to 13 (GDVGGT) participates in ATP binding.

It belongs to the bacterial glucokinase family.

The protein resides in the cytoplasm. It carries out the reaction D-glucose + ATP = D-glucose 6-phosphate + ADP + H(+). This Erwinia tasmaniensis (strain DSM 17950 / CFBP 7177 / CIP 109463 / NCPPB 4357 / Et1/99) protein is Glucokinase.